The sequence spans 138 residues: Probable non-specific lipid-transfer protein 1 (138 aa).

The signal sequence occupies residues 1-36 (MRTVSARSSVALVVIVAAVLVWTSSASVAPAPAPGS). 4 disulfides stabilise this stretch: Cys-40–Cys-88, Cys-50–Cys-65, Cys-66–Cys-111, and Cys-86–Cys-127.

The protein belongs to the plant LTP family.

In terms of biological role, plant non-specific lipid-transfer proteins transfer phospholipids as well as galactolipids across membranes. May play a role in wax or cutin deposition in the cell walls of expanding epidermal cells and certain secretory tissues. The sequence is that of Probable non-specific lipid-transfer protein 1 from Parietaria judaica (Pellitory-of-the-wall).